Reading from the N-terminus, the 967-residue chain is LRR receptor-like serine/threonine-protein kinase ERL2 (967 aa).

The first 27 residues, 1-27 (MRRIETMKGLFFCLGMVVFMLLGSVSP), serve as a signal peptide directing secretion. Residues 28-585 (MNNEGKALMA…SLPKSQVFTR (558 aa)) are Extracellular-facing. Asparagine 70 and asparagine 79 each carry an N-linked (GlcNAc...) asparagine glycan. LRR repeat units lie at residues 74–97 (NVVS…GDLM), 98–120 (NLQS…IGNC), 122–145 (SLAY…SKLK), 146–166 (QLEF…ATLT), 170–192 (NLKT…LYWN), 194–216 (VLQY…MCQL), 218–240 (GLWY…IGNC), 242–261 (SFEI…PYNI), 265–287 (QVAT…IGLM), 289–311 (ALAV…LGNL), 313–335 (FTGK…LGNM), 337–359 (RLSY…LGKL), 361–382 (QLFE…NISS), 385–406 (ALNQ…EFRN), 409–431 (SLTY…LGHI), 433–456 (NLDT…GDLE), 457–479 (HLLI…FGNL), 481–503 (SIQI…LGQL), 505–527 (NINS…LTNC), and 529–550 (SLAN…MKNF). N-linked (GlcNAc...) asparagine glycans are attached at residues asparagine 228 and asparagine 239. 2 N-linked (GlcNAc...) asparagine glycosylation sites follow: asparagine 310 and asparagine 334. Asparagine 379 carries an N-linked (GlcNAc...) asparagine glycan. N-linked (GlcNAc...) asparagine glycans are attached at residues asparagine 414, asparagine 443, asparagine 462, and asparagine 469. Asparagine 534, asparagine 539, and asparagine 549 each carry an N-linked (GlcNAc...) asparagine glycan. A helical membrane pass occupies residues 586–606 (VAVICMVLGFITLICMIFIAV). Residues 607-967 (YKSKQQKPVL…FREDISKSSL (361 aa)) lie on the Cytoplasmic side of the membrane. Phosphothreonine is present on residues threonine 640 and threonine 648. The 271-residue stretch at 651–921 (LDEKYIIGYG…EVSRVLLSLV (271 aa)) folds into the Protein kinase domain. Residues 657 to 665 (IGYGASSTV) and lysine 679 each bind ATP. Residues tyrosine 724 and tyrosine 763 each carry the phosphotyrosine modification. Aspartate 776 serves as the catalytic Proton acceptor. Phosphotyrosine is present on tyrosine 818. Threonine 826 is subject to Phosphothreonine. Residues 921–955 (VPSPPPKKLPSPAKVQEGEERRESHSSDTTTPQWF) form a disordered region. A compositionally biased stretch (basic and acidic residues) spans 936–946 (QEGEERRESHS).

This sequence belongs to the protein kinase superfamily. Ser/Thr protein kinase family. Mostly expressed in developing organs, including bud clusters, flowers, siliques and young rosettes. Also detected in mature aboveground organs, such as leaves, stems and pedicels, but barely in roots.

The protein localises to the membrane. The enzyme catalyses L-seryl-[protein] + ATP = O-phospho-L-seryl-[protein] + ADP + H(+). The catalysed reaction is L-threonyl-[protein] + ATP = O-phospho-L-threonyl-[protein] + ADP + H(+). Its function is as follows. Receptor kinase that regulates inflorescence architecture and organ shape as well as stomatal patterning, including density and clustering, together with ERL1 and ER. The protein is LRR receptor-like serine/threonine-protein kinase ERL2 (ERL2) of Arabidopsis thaliana (Mouse-ear cress).